The following is a 295-amino-acid chain: Glycine--tRNA ligase alpha subunit (295 aa).

This sequence belongs to the class-II aminoacyl-tRNA synthetase family. In terms of assembly, tetramer of two alpha and two beta subunits.

The protein localises to the cytoplasm. The catalysed reaction is tRNA(Gly) + glycine + ATP = glycyl-tRNA(Gly) + AMP + diphosphate. The polypeptide is Glycine--tRNA ligase alpha subunit (Desulforamulus reducens (strain ATCC BAA-1160 / DSM 100696 / MI-1) (Desulfotomaculum reducens)).